Here is a 250-residue protein sequence, read N- to C-terminus: Triosephosphate isomerase (250 aa).

Asn-10 and Lys-12 together coordinate substrate. His-94 (electrophile) is an active-site residue. The active-site Proton acceptor is Glu-167.

The protein belongs to the triosephosphate isomerase family. As to quaternary structure, homodimer.

It localises to the cytoplasm. The catalysed reaction is D-glyceraldehyde 3-phosphate = dihydroxyacetone phosphate. It participates in carbohydrate biosynthesis; gluconeogenesis. Its pathway is carbohydrate degradation; glycolysis; D-glyceraldehyde 3-phosphate from glycerone phosphate: step 1/1. The protein is Triosephosphate isomerase of Taenia solium (Pork tapeworm).